The chain runs to 231 residues: Small ribosomal subunit protein uS2 (231 aa).

The protein belongs to the universal ribosomal protein uS2 family.

In Blochmanniella floridana, this protein is Small ribosomal subunit protein uS2.